The chain runs to 83 residues: Small ribosomal subunit protein uS19m (83 aa).

This sequence belongs to the universal ribosomal protein uS19 family.

Its subcellular location is the mitochondrion. This is Small ribosomal subunit protein uS19m (RPS19) from Tetraselmis subcordiformis (Marine green alga).